We begin with the raw amino-acid sequence, 355 residues long: UDP-N-acetylglucosamine--N-acetylmuramyl-(pentapeptide) pyrophosphoryl-undecaprenol N-acetylglucosamine transferase (355 aa).

UDP-N-acetyl-alpha-D-glucosamine is bound by residues 14-16 (TGG), asparagine 126, arginine 162, serine 190, isoleucine 243, 262-267 (ALTVSE), and glutamine 287.

This sequence belongs to the glycosyltransferase 28 family. MurG subfamily.

Its subcellular location is the cell inner membrane. It catalyses the reaction di-trans,octa-cis-undecaprenyl diphospho-N-acetyl-alpha-D-muramoyl-L-alanyl-D-glutamyl-meso-2,6-diaminopimeloyl-D-alanyl-D-alanine + UDP-N-acetyl-alpha-D-glucosamine = di-trans,octa-cis-undecaprenyl diphospho-[N-acetyl-alpha-D-glucosaminyl-(1-&gt;4)]-N-acetyl-alpha-D-muramoyl-L-alanyl-D-glutamyl-meso-2,6-diaminopimeloyl-D-alanyl-D-alanine + UDP + H(+). It functions in the pathway cell wall biogenesis; peptidoglycan biosynthesis. In terms of biological role, cell wall formation. Catalyzes the transfer of a GlcNAc subunit on undecaprenyl-pyrophosphoryl-MurNAc-pentapeptide (lipid intermediate I) to form undecaprenyl-pyrophosphoryl-MurNAc-(pentapeptide)GlcNAc (lipid intermediate II). The chain is UDP-N-acetylglucosamine--N-acetylmuramyl-(pentapeptide) pyrophosphoryl-undecaprenol N-acetylglucosamine transferase from Vibrio parahaemolyticus serotype O3:K6 (strain RIMD 2210633).